A 768-amino-acid chain; its full sequence is DNA ligase (768 aa).

A compositionally biased stretch (low complexity) spans 1-11 (MSPSAPANSAP). The disordered stretch occupies residues 1-28 (MSPSAPANSAPDPDRNGVPDVGPASAAP). NAD(+)-binding positions include 62-66 (DAEYD), 111-112 (SI), and glutamate 148. Catalysis depends on lysine 150, which acts as the N6-AMP-lysine intermediate. Arginine 171, glutamate 238, lysine 361, and lysine 385 together coordinate NAD(+). Positions 484, 487, 502, and 508 each coordinate Zn(2+). The region spanning 670-759 (AAELPLAGKT…EADADADAEG (90 aa)) is the BRCT domain.

This sequence belongs to the NAD-dependent DNA ligase family. LigA subfamily. Requires Mg(2+) as cofactor. Mn(2+) serves as cofactor.

The catalysed reaction is NAD(+) + (deoxyribonucleotide)n-3'-hydroxyl + 5'-phospho-(deoxyribonucleotide)m = (deoxyribonucleotide)n+m + AMP + beta-nicotinamide D-nucleotide.. Functionally, DNA ligase that catalyzes the formation of phosphodiester linkages between 5'-phosphoryl and 3'-hydroxyl groups in double-stranded DNA using NAD as a coenzyme and as the energy source for the reaction. It is essential for DNA replication and repair of damaged DNA. The protein is DNA ligase of Leptothrix cholodnii (strain ATCC 51168 / LMG 8142 / SP-6) (Leptothrix discophora (strain SP-6)).